A 348-amino-acid chain; its full sequence is Xaa-Pro dipeptidase (348 aa).

Co(2+) contacts are provided by aspartate 209, aspartate 220, histidine 284, glutamate 313, and glutamate 327.

The protein belongs to the peptidase M24B family. Archaeal-type prolidase subfamily. As to quaternary structure, homodimer. Co(2+) serves as cofactor. It depends on Mn(2+) as a cofactor.

Its subcellular location is the cytoplasm. The enzyme catalyses Xaa-L-Pro dipeptide + H2O = an L-alpha-amino acid + L-proline. In terms of biological role, splits dipeptides with a prolyl in the C-terminal position and a nonpolar amino acid at the N-terminal position. The protein is Xaa-Pro dipeptidase (pepQ) of Pyrococcus furiosus (strain ATCC 43587 / DSM 3638 / JCM 8422 / Vc1).